We begin with the raw amino-acid sequence, 1133 residues long: Envelopment polyprotein (1133 aa).

Positions 1 to 17 (MWSLLLLAALVGQGFAL) are cleaved as a signal peptide. Residues 18–484 (KNVFDMRIQC…PGFHGWATAA (467 aa)) are Lumenal-facing. 11 disulfide bridges follow: Cys27/Cys149, Cys61/Cys155, Cys107/Cys126, Cys131/Cys136, Cys173/Cys183, Cys208/Cys245, Cys232/Cys349, Cys374/Cys433, Cys378/Cys387, Cys403/Cys422, and Cys450/Cys473. Residue Asn132 is glycosylated (N-linked (GlcNAc...) asparagine; by host). N-linked (GlcNAc...) asparagine; by host glycans are attached at residues Asn233 and Asn345. Asn397 is a glycosylation site (N-linked (GlcNAc...) asparagine; by host). The helical transmembrane segment at 485–504 (LLITFCFGWVLIPACTLAIL) threads the bilayer. Residues 505-626 (LVLKFFANIL…NLFRYKSRCY (122 aa)) are Cytoplasmic-facing. The segment at 514-531 (LHTSNQENRFKAILRKIK) is binding to the ribonucleoprotein. CCHC-type zinc fingers lie at residues 543–563 (CEIC…NLSC) and 568–589 (CPYC…YKVC). Binding to the ribonucleoprotein regions lie at residues 586–603 (YKVC…KKTV), 590–601 (QATHRFREDLKK), and 609–623 (GPGC…RYKS). Positions 609–632 (GPGCYRTLNLFRYKSRCYILTMWT) constitute an ITAM domain. Positions 613-616 (YRTL) match the YxxL motif. Residues 627-647 (ILTMWTLLLIIESILWAASAA) form a helical membrane-spanning segment. Topologically, residues 648-1104 (EIPLVPLWTD…WVMGIINGNW (457 aa)) are lumenal. Disulfide bonds link Cys733–Cys768, Cys737–Cys775, Cys749–Cys883, Cys763–Cys894, Cys778–Cys902, Cys804–Cys813, Cys821–Cys830, and Cys861–Cys865. Residues 755–775 (YEYENSWACNPPDCPGVGTGC) are fusion loop. The N-linked (GlcNAc...) asparagine; by host glycan is linked to Asn926. 5 disulfide bridges follow: Cys968/Cys998, Cys991/Cys1043, Cys1008/Cys1013, Cys1044/Cys1049, and Cys1083/Cys1087. Residues 1105-1125 (VVLIVLCVLLLFSLILLSILC) form a helical membrane-spanning segment. Residues 1120-1133 (LLSILCPVRKHKKS) form a binding to the ribonucleoprotein region. At 1126 to 1133 (PVRKHKKS) the chain is on the cytoplasmic side.

It belongs to the hantavirus envelope glycoprotein family. Homodimer. Homotetramer; forms heterotetrameric Gn-Gc spikes in the pre-fusion conformation. Interacts (via C-terminus) with the nucleoprotein. Interacts with host TUFM; this interaction contributes to the virus-induced degradation of mitochondria by autophagy, which leads to degradation of host MAVS and inhibition of type I interferon (IFN) responses. Interacts with host MAP1LC3B; this interaction contributes to the virus-induced degradation of mitochondria by autophagy, which leads to degradation of host MAVS and inhibition of type I interferon (IFN) responses. As to quaternary structure, homodimer. Homotetramer; forms heterotetrameric Gn-Gc spikes in the pre-fusion conformation. Homotrimer; forms homotrimer in the post-fusion conformation at acidic pH. Interacts (via C-terminus) with the nucleoprotein. Envelope polyprotein precursor is quickly cleaved in vivo just after synthesis, presumably by host signal peptidase.

Its subcellular location is the virion membrane. It localises to the host cell surface. The protein resides in the host Golgi apparatus membrane. It is found in the host endoplasmic reticulum membrane. The protein localises to the host mitochondrion. Forms homotetramers with glycoprotein C at the surface of the virion. Attaches the virion to host cell receptors including integrin ITGAV/ITGB3. This attachment induces virion internalization predominantly through clathrin-dependent endocytosis. Mediates the assembly and budding of infectious virus particles through its interaction with the nucleocapsid protein and the viral genome. May dysregulate normal immune and endothelial cell responses through an ITAM motif. Translocates to mitochondria, binds to host TUFM and recruits MAP1LC3B. These interactions induce mitochondrial autophagy and therefore destruction of host MAVS leading to inhibition of type I interferon (IFN) responses. Concomitant breakdown of glycoprotein N is apparently prevented by the nucleoprotein that may inhibit Gn-stimulated autophagosome-lysosome fusion. Interacts with the viral genomic RNA. Its function is as follows. Forms homotetramers with glycoprotein N at the surface of the virion. Attaches the virion to host cell receptors including integrin ITGAV/ITGB3. This attachment induces virion internalization predominantly through clathrin-dependent endocytosis. Class II fusion protein that promotes fusion of viral membrane with host endosomal membrane after endocytosis of the virion. This chain is Envelopment polyprotein (GP), found in Homo sapiens (Human).